Consider the following 239-residue polypeptide: Probable transcriptional regulatory protein MG332 (239 aa).

This sequence belongs to the TACO1 family.

The protein resides in the cytoplasm. The chain is Probable transcriptional regulatory protein MG332 from Mycoplasma genitalium (strain ATCC 33530 / DSM 19775 / NCTC 10195 / G37) (Mycoplasmoides genitalium).